We begin with the raw amino-acid sequence, 426 residues long: Serine--tRNA ligase (426 aa).

230-232 (TAE) contributes to the L-serine binding site. Residue 261 to 263 (RSE) participates in ATP binding. Glutamate 284 contacts L-serine. An ATP-binding site is contributed by 348-351 (EISS). Serine 384 provides a ligand contact to L-serine.

The protein belongs to the class-II aminoacyl-tRNA synthetase family. Type-1 seryl-tRNA synthetase subfamily. In terms of assembly, homodimer. The tRNA molecule binds across the dimer.

It localises to the cytoplasm. The catalysed reaction is tRNA(Ser) + L-serine + ATP = L-seryl-tRNA(Ser) + AMP + diphosphate + H(+). It carries out the reaction tRNA(Sec) + L-serine + ATP = L-seryl-tRNA(Sec) + AMP + diphosphate + H(+). The protein operates within aminoacyl-tRNA biosynthesis; selenocysteinyl-tRNA(Sec) biosynthesis; L-seryl-tRNA(Sec) from L-serine and tRNA(Sec): step 1/1. In terms of biological role, catalyzes the attachment of serine to tRNA(Ser). Is also able to aminoacylate tRNA(Sec) with serine, to form the misacylated tRNA L-seryl-tRNA(Sec), which will be further converted into selenocysteinyl-tRNA(Sec). This is Serine--tRNA ligase from Phenylobacterium zucineum (strain HLK1).